Here is an 83-residue protein sequence, read N- to C-terminus: UPF0248 protein PH1212.1 (83 aa).

Belongs to the UPF0248 family.

This is UPF0248 protein PH1212.1 from Pyrococcus horikoshii (strain ATCC 700860 / DSM 12428 / JCM 9974 / NBRC 100139 / OT-3).